Reading from the N-terminus, the 148-residue chain is Large ribosomal subunit protein bL9 (148 aa).

The protein belongs to the bacterial ribosomal protein bL9 family.

In terms of biological role, binds to the 23S rRNA. The chain is Large ribosomal subunit protein bL9 from Macrococcus caseolyticus (strain JCSC5402) (Macrococcoides caseolyticum).